The primary structure comprises 461 residues: MKKKIISAILMSTVILSAAAPLSGVYADTNSDIAKQDATISSAQSAKAQAQAQVDSLQSKVDSLQQKQTSTKAQIAKIESEAKALNAQIATLNESIKERTKTLEAQARSAQVNSSATNYMDAVVNSKSLTDVIQKVTAIATVSSANKQMLEQQEKEQKELSQKSETVKKNYNQFVSLSQSLDSQAQELTSQQAELKVATLNYQATIATAQDKKQALLDEKAAAEKAAQEAAKKQAAYEAQQKEAAQAQAASTAATAKAVEAATSSASASSSQAPQVSTSTDNTTSNASASNSSNSSSNSSSSSSSSSSSSSSSSNSNAGGNTNSGTSTGNTGGTTTGGSGINSSPIGNPYAGGGCTDYVWQYFAAQGIYIRNIMPGNGGQWASNGPAQGVLHVVGAAPGVIASSFSADFVGYANSPYGHVAIVKSVNSDGTITIKEGGYGTTWWGHERTVSASGVTFLMPN.

A signal peptide spans 1–27 (MKKKIISAILMSTVILSAAAPLSGVYA). Low complexity predominate over residues 264 to 329 (SSASASSSQA…GNTNSGTSTG (66 aa)). Residues 264–343 (SSASASSSQA…TTTGGSGINS (80 aa)) form a disordered region. A compositionally biased stretch (gly residues) spans 330–340 (NTGGTTTGGSG). Residues 330 to 459 (NTGGTTTGGS…VSASGVTFLM (130 aa)) form the Peptidase C51 domain.

This chain is Secreted 45 kDa protein (usp45), found in Lactococcus lactis subsp. cremoris (strain MG1363).